The primary structure comprises 221 residues: GTP-binding nuclear protein Ran2 (221 aa).

One can recognise a Small GTPase Ran-type domain in the interval 10–174; it reads DYPSFKLVIV…LYLARKLAGD (165 aa). GTP is bound at residue 21 to 28; it reads DGGTGKTT. The switch-I stretch occupies residues 40 to 48; the sequence is KKYEPTIGV. Residues Gly-71, 125-128, and 153-155 contribute to the GTP site; these read NKVD and SAK. Residues 71 to 87 form a switch-II region; sequence GQEKFGGLRDGYYIHGQ.

This sequence belongs to the small GTPase superfamily. Ran family. As to quaternary structure, found in a nuclear export complex with RanGTP, exportin and pre-miRNA.

Its subcellular location is the nucleus. Its function is as follows. GTP-binding protein involved in nucleocytoplasmic transport. Required for the import of protein into the nucleus and also for RNA export. Involved in chromatin condensation and control of cell cycle. The polypeptide is GTP-binding nuclear protein Ran2 (RAN2) (Solanum lycopersicum (Tomato)).